The primary structure comprises 123 residues: UPF0102 protein Psyr_4114 (123 aa).

It belongs to the UPF0102 family.

The chain is UPF0102 protein Psyr_4114 from Pseudomonas syringae pv. syringae (strain B728a).